The sequence spans 647 residues: Phosphatidylinositol polyphosphate 5-phosphatase type IV (647 aa).

Disordered regions lie at residues 1 to 80, 101 to 131, and 177 to 196; these read MPSK…QPPI, RGSQEDLTVQNGASPCRGSLQDSVAQSPAYS, and HRDAASGGPPSRLASLHASH. Repeat unit 1 spans residues 52–55; sequence PMPP. The interval 52–243 is 3 X 4 AA repeats of P-X-X-P; it reads PMPPFSIPAK…AHSNLGPSRP (192 aa). Positions 60–75 are enriched in polar residues; that stretch reads AKTSNQNPQTKANLIT. Repeat 2 spans residues 76-79; the sequence is PQPP. Ser-103 is subject to Phosphoserine. The segment covering 120–129 has biased composition (polar residues); sequence LQDSVAQSPA. Position 197 is a phosphothreonine (Thr-197). The stretch at 240–243 is repeat 3; it reads PSRP. Ser-245 and Ser-259 each carry phosphoserine. Cys-644 is subject to Cysteine methyl ester. Cys-644 carries the S-farnesyl cysteine lipid modification. Positions 645 to 647 are cleaved as a propeptide — removed in mature form; sequence TVS.

The protein belongs to the inositol polyphosphate 5-phosphatase family. Interacts (when prenylated) with PDE6D; this is important for normal location in cilia. As to expression, highly expressed in testis, in pachytene and diplotene spermatocytes, but not in more mature elongating spermatids. Detected in neurons throughout the brain.

It localises to the cytoplasm. The protein localises to the cytoskeleton. The protein resides in the cilium axoneme. It is found in the golgi apparatus. Its subcellular location is the golgi stack membrane. It localises to the cell projection. The protein localises to the ruffle. The protein resides in the cell membrane. It is found in the nucleus. The enzyme catalyses a 1,2-diacyl-sn-glycero-3-phospho-(1D-myo-inositol-4,5-bisphosphate) + H2O = a 1,2-diacyl-sn-glycero-3-phospho-(1D-myo-inositol 4-phosphate) + phosphate. The catalysed reaction is a 1,2-diacyl-sn-glycero-3-phospho-(1D-myo-inositol-3,4,5-trisphosphate) + H2O = a 1,2-diacyl-sn-glycero-3-phospho-(1D-myo-inositol-3,4-bisphosphate) + phosphate. It catalyses the reaction a 1,2-diacyl-sn-glycero-3-phospho-(1D-myo-inositol-3,5-bisphosphate) + H2O = a 1,2-diacyl-sn-glycero-3-phospho-(1D-myo-inositol-3-phosphate) + phosphate. In terms of biological role, phosphatidylinositol (PtdIns) phosphatase that specifically hydrolyzes the 5-phosphate of phosphatidylinositol-3,4,5-trisphosphate (PtdIns(3,4,5)P3), phosphatidylinositol 4,5-bisphosphate (PtdIns(4,5)P2) and phosphatidylinositol 3,5-bisphosphate (PtdIns(3,5)P2). Specific for lipid substrates, inactive towards water soluble inositol phosphates. Specific for lipid substrates, inactive towards water soluble inositol phosphates. Plays an essential role in the primary cilium by controlling ciliary growth and phosphoinositide 3-kinase (PI3K) signaling and stability. The sequence is that of Phosphatidylinositol polyphosphate 5-phosphatase type IV (Inpp5e) from Mus musculus (Mouse).